We begin with the raw amino-acid sequence, 648 residues long: 5-aminolevulinate synthase, mitochondrial (648 aa).

Residues 1 to 26 (MEALLQQSRAMCPFLKRSSPNTLRSL) constitute a mitochondrion transit peptide. A disordered region spans residues 69–109 (KRFTSSAAGVPGAGAGTPKPTRGSPGKRALHSTGGNGANMS). Positions 170, 283, and 302 each coordinate substrate. The pyridoxal 5'-phosphate site is built by Ser-335, His-363, and Thr-409. Lys-412 is an active-site residue. N6-(pyridoxal phosphate)lysine is present on Lys-412. Thr-441 and Thr-442 together coordinate pyridoxal 5'-phosphate. Thr-527 serves as a coordination point for substrate.

It belongs to the class-II pyridoxal-phosphate-dependent aminotransferase family. Homodimer. The cofactor is pyridoxal 5'-phosphate.

The protein resides in the mitochondrion matrix. The catalysed reaction is succinyl-CoA + glycine + H(+) = 5-aminolevulinate + CO2 + CoA. Its pathway is porphyrin-containing compound metabolism; protoporphyrin-IX biosynthesis; 5-aminolevulinate from glycine: step 1/1. Functionally, catalyzes the synthesis of 5-aminolevulinate (ALA) from succinyl-CoA and glycine, the first and rate-limiting step in heme biosynthesis. The protein is 5-aminolevulinate synthase, mitochondrial (hemA) of Emericella nidulans (strain FGSC A4 / ATCC 38163 / CBS 112.46 / NRRL 194 / M139) (Aspergillus nidulans).